We begin with the raw amino-acid sequence, 254 residues long: Zinc finger FYVE domain-containing protein 21 (254 aa).

The FYVE-type zinc finger occupies 44-104 (DKECPRCMQC…QCAGCAPVSR (61 aa)). Residues cysteine 50, cysteine 53, cysteine 66, cysteine 69, cysteine 74, cysteine 77, cysteine 96, and cysteine 99 each coordinate Zn(2+). The interval 107–254 (ADFYDRQLKL…AKLLYESRDQ (148 aa)) is PH-like.

As to quaternary structure, interacts with PTK2/FAK1.

It is found in the cell junction. The protein localises to the focal adhesion. Its subcellular location is the cytoplasmic vesicle. The protein resides in the endosome. Functionally, plays a role in cell adhesion, and thereby in cell motility which requires repeated formation and disassembly of focal adhesions. Regulates microtubule-induced PTK2/FAK1 dephosphorylation, an event important for focal adhesion disassembly, as well as integrin beta-1/ITGB1 cell surface expression. The chain is Zinc finger FYVE domain-containing protein 21 (ZFYVE21) from Bos taurus (Bovine).